Reading from the N-terminus, the 503-residue chain is Aspartyl/glutamyl-tRNA(Asn/Gln) amidotransferase subunit B (503 aa).

This sequence belongs to the GatB/GatE family. GatB subfamily. In terms of assembly, heterotrimer of A, B and C subunits.

It catalyses the reaction L-glutamyl-tRNA(Gln) + L-glutamine + ATP + H2O = L-glutaminyl-tRNA(Gln) + L-glutamate + ADP + phosphate + H(+). The enzyme catalyses L-aspartyl-tRNA(Asn) + L-glutamine + ATP + H2O = L-asparaginyl-tRNA(Asn) + L-glutamate + ADP + phosphate + 2 H(+). Its function is as follows. Allows the formation of correctly charged Asn-tRNA(Asn) or Gln-tRNA(Gln) through the transamidation of misacylated Asp-tRNA(Asn) or Glu-tRNA(Gln) in organisms which lack either or both of asparaginyl-tRNA or glutaminyl-tRNA synthetases. The reaction takes place in the presence of glutamine and ATP through an activated phospho-Asp-tRNA(Asn) or phospho-Glu-tRNA(Gln). The polypeptide is Aspartyl/glutamyl-tRNA(Asn/Gln) amidotransferase subunit B (Roseobacter denitrificans (strain ATCC 33942 / OCh 114) (Erythrobacter sp. (strain OCh 114))).